The following is a 209-amino-acid chain: Large ribosomal subunit protein uL3 (209 aa).

The tract at residues F128–A163 is disordered.

The protein belongs to the universal ribosomal protein uL3 family. In terms of assembly, part of the 50S ribosomal subunit. Forms a cluster with proteins L14 and L19.

Functionally, one of the primary rRNA binding proteins, it binds directly near the 3'-end of the 23S rRNA, where it nucleates assembly of the 50S subunit. This is Large ribosomal subunit protein uL3 from Chlorobium phaeobacteroides (strain DSM 266 / SMG 266 / 2430).